The sequence spans 806 residues: Transitional endoplasmic reticulum ATPase (806 aa).

N-acetylalanine is present on Ala2. Phosphoserine occurs at positions 3 and 7. Lys8 participates in a covalent cross-link: Glycyl lysine isopeptide (Lys-Gly) (interchain with G-Cter in SUMO2). Ser13 bears the Phosphoserine mark. Residue Lys18 forms a Glycyl lysine isopeptide (Lys-Gly) (interchain with G-Cter in SUMO2) linkage. Residue Ser37 is modified to Phosphoserine. 247–253 lines the ATP pocket; the sequence is PGTGKTL. The residue at position 315 (Lys315) is an N6,N6,N6-trimethyllysine; by VCPKMT. ATP-binding residues include Asn348 and His384. Thr436 is modified (phosphothreonine). Ser462 carries the phosphoserine modification. N6-acetyllysine is present on residues Lys502 and Lys505. Residue 521–526 participates in ATP binding; sequence GCGKTL. An N6-acetyllysine; alternate modification is found at Lys668. Lys668 bears the N6-succinyllysine; alternate mark. At Ser702 the chain carries Phosphoserine. A disordered region spans residues 708–727; the sequence is RRERERQTNPSAMEVEEDDP. Lys754 bears the N6-acetyllysine mark. The disordered stretch occupies residues 768 to 806; the sequence is FGSFRFPSGNQGGAGPSQGSGGGTGGSVYTEDNDDDLYG. Ser770, Ser775, and Ser787 each carry phosphoserine. A compositionally biased stretch (gly residues) spans 777–793; that stretch reads NQGGAGPSQGSGGGTGG. The interaction with UBXN6 stretch occupies residues 797–806; it reads TEDNDDDLYG. Residues 802-806 carry the PIM motif motif; sequence DDLYG. Tyr805 carries the phosphotyrosine modification.

It belongs to the AAA ATPase family. In terms of assembly, homohexamer. Forms a ring-shaped particle of 12.5 nm diameter, that displays 6-fold radial symmetry. Part of a ternary complex containing STX5A, NSFL1C and VCP. NSFL1C forms a homotrimer that binds to one end of a VCP homohexamer. The complex binds to membranes enriched in phosphatidylethanolamine-containing lipids and promotes Golgi membrane fusion. Binds to a heterodimer of NPLOC4 and UFD1, binding to this heterodimer inhibits Golgi-membrane fusion. Interaction with VCIP135 leads to dissociation of the complex via ATP hydrolysis by VCP. Part of a ternary complex containing NPLOC4, UFD1 and VCP. Interacts with NSFL1C-like protein p37; the complex has membrane fusion activity and is required for Golgi and endoplasmic reticulum biogenesis. Interacts with SELENOS and SYVN1, as well as with DERL1 (via SHP-box motif), DERL2 and DERL3; which probably transfer misfolded proteins from the ER to VCP. Interacts with SVIP and forms a complex with SVIP and DERL1. Component of a complex required to couple retrotranslocation, ubiquitination and deglycosylation composed of NGLY1, SAKS1, AMFR, VCP and RAD23B. Part of a complex composed of STUB1/CHIP, VCP/p97, CHRNA3, and UBXN2A that modulates the ubiquitination and endoplasmic reticulum-associated degradation (ERAD) of CHRNA3. Within the complex UBXN2A acts as a scaffold protein required for the interaction of CHRNA3 with VCP/p97, this interaction also inhibits CHRNA3 ubiquitination by STUB1/CHIP and subsequently ERAD. Interacts with UBXN2A (via UBX domain); the interaction is required for the interaction of CHRNA3 in the STUB1-VCP-UBXN2A complex. Directly interacts with UBXN4 and RNF19A. Interacts with CASR. Interacts with UBE4B and YOD1. Interacts with clathrin. Interacts with RNF103. Interacts with TRIM13 and TRIM21. Component of a VCP/p97-AMFR/gp78 complex that participates in the final step of the endoplasmic reticulum-associated degradation (ERAD) of HMGCR. Interacts directly with AMFR/gp78 (via its VIM). Interacts with RHBDD1 (via C-terminal domain). Interacts with SPRTN; leading to recruitment to stalled replication forks. Interacts with WASHC5. Interacts with UBOX5. Interacts (via N-terminus) with UBXN7, UBXN8, and probably several other UBX domain-containing proteins (via UBX domains); the interactions are mutually exclusive with VIM-dependent interactions such as those with AMFR and SELENOS. Forms a complex with UBQLN1 and UBXN4. Interacts (via the PIM motif) with RNF31 (via the PUB domain). Interacts with RIGI and RNF125; interaction takes place when RIGI is ubiquitinated via 'Lys-63'-linked ubiquitin on its CARD domains, leading to recruit RNF125 and promote ubiquitination and degradation of RIGI. Interacts with BAG6. Interacts with UBXN10. Interacts with UBXN6; the interaction with UBXN6 is direct and competitive with UFD1. Forms a ternary complex with CAV1 and UBXN6. Interacts with PLAA, UBXN6 and YOD1; may form a complex involved in macroautophagy. Interacts with ANKZF1. Interacts with ubiquitin-binding protein FAF1. Interacts with ZFAND2B (via VIM motif); the interaction is direct. Interacts with ZFAND1 (via its ubiquitin-like region); this interaction occurs in an arsenite-dependent manner. Interacts with CCDC47. Interacts with UBAC2. Interacts with LMBR1L. Interacts with ATXN3. Interacts with TEX264; bridging VCP to covalent DNA-protein cross-links (DPCs). Interacts with FBXL4. Post-translationally, phosphorylated by tyrosine kinases in response to T-cell antigen receptor activation. Phosphorylated in mitotic cells. ISGylated. In terms of processing, methylation at Lys-315 catalyzed by VCPKMT is increased in the presence of ASPSCR1. Lys-315 methylation may decrease ATPase activity.

It localises to the cytoplasm. The protein localises to the cytosol. The protein resides in the endoplasmic reticulum. Its subcellular location is the nucleus. It is found in the stress granule. The enzyme catalyses ATP + H2O = ADP + phosphate + H(+). Its function is as follows. Necessary for the fragmentation of Golgi stacks during mitosis and for their reassembly after mitosis. Involved in the formation of the transitional endoplasmic reticulum (tER). The transfer of membranes from the endoplasmic reticulum to the Golgi apparatus occurs via 50-70 nm transition vesicles which derive from part-rough, part-smooth transitional elements of the endoplasmic reticulum (tER). Vesicle budding from the tER is an ATP-dependent process. The ternary complex containing UFD1, VCP and NPLOC4 binds ubiquitinated proteins and is necessary for the export of misfolded proteins from the ER to the cytoplasm, where they are degraded by the proteasome. The NPLOC4-UFD1-VCP complex regulates spindle disassembly at the end of mitosis and is necessary for the formation of a closed nuclear envelope. Regulates E3 ubiquitin-protein ligase activity of RNF19A. Component of the VCP/p97-AMFR/gp78 complex that participates in the final step of the sterol-mediated ubiquitination and endoplasmic reticulum-associated degradation (ERAD) of HMGCR. Mediates the endoplasmic reticulum-associated degradation of CHRNA3 in cortical neurons as part of the STUB1-VCP-UBXN2A complex. Involved in endoplasmic reticulum stress-induced pre-emptive quality control, a mechanism that selectively attenuates the translocation of newly synthesized proteins into the endoplasmic reticulum and reroutes them to the cytosol for proteasomal degradation. Involved in clearance process by mediating G3BP1 extraction from stress granules. Also involved in DNA damage response: recruited to double-strand breaks (DSBs) sites in a RNF8- and RNF168-dependent manner and promotes the recruitment of TP53BP1 at DNA damage sites. Recruited to stalled replication forks by SPRTN: may act by mediating extraction of DNA polymerase eta (POLH) to prevent excessive translesion DNA synthesis and limit the incidence of mutations induced by DNA damage. Together with SPRTN metalloprotease, involved in the repair of covalent DNA-protein cross-links (DPCs) during DNA synthesis. Involved in interstrand cross-link repair in response to replication stress by mediating unloading of the ubiquitinated CMG helicase complex. Mediates extraction of PARP1 trapped to chromatin: recognizes and binds ubiquitinated PARP1 and promotes its removal. Required for cytoplasmic retrotranslocation of stressed/damaged mitochondrial outer-membrane proteins and their subsequent proteasomal degradation. Essential for the maturation of ubiquitin-containing autophagosomes and the clearance of ubiquitinated protein by autophagy. Acts as a negative regulator of type I interferon production by interacting with RIGI: interaction takes place when RIGI is ubiquitinated via 'Lys-63'-linked ubiquitin on its CARD domains, leading to recruit RNF125 and promote ubiquitination and degradation of RIGI. May play a role in the ubiquitin-dependent sorting of membrane proteins to lysosomes where they undergo degradation. May more particularly play a role in caveolins sorting in cells. By controlling the steady-state expression of the IGF1R receptor, indirectly regulates the insulin-like growth factor receptor signaling pathway. This chain is Transitional endoplasmic reticulum ATPase (VCP), found in Homo sapiens (Human).